Consider the following 558-residue polypeptide: Glutamine--tRNA ligase (558 aa).

Residues 36–46 (PEPNGYLHIGH) carry the 'HIGH' region motif. Residues 37-39 (EPN) and 43-49 (HIGHAKS) each bind ATP. Residues D69 and Y214 each contribute to the L-glutamine site. Residues T233, 263–264 (RL), and 271–273 (LSK) contribute to the ATP site. Residues 270 to 274 (LLSKR) carry the 'KMSKS' region motif.

This sequence belongs to the class-I aminoacyl-tRNA synthetase family. As to quaternary structure, monomer.

The protein resides in the cytoplasm. The enzyme catalyses tRNA(Gln) + L-glutamine + ATP = L-glutaminyl-tRNA(Gln) + AMP + diphosphate. The protein is Glutamine--tRNA ligase of Bradyrhizobium diazoefficiens (strain JCM 10833 / BCRC 13528 / IAM 13628 / NBRC 14792 / USDA 110).